The following is a 158-amino-acid chain: Cytochrome c-type biogenesis protein CcmE (158 aa).

Residues 1–8 are Cytoplasmic-facing; that stretch reads MNIRRRRR. A helical; Signal-anchor for type II membrane protein membrane pass occupies residues 9–29; the sequence is LLVVVAILVGLGLATGLVMYA. Topologically, residues 30–158 are periplasmic; it reads LRSNIDLFYT…GLLNVSEPTR (129 aa). Heme-binding residues include histidine 130 and tyrosine 134.

The protein belongs to the CcmE/CycJ family.

It is found in the cell inner membrane. Heme chaperone required for the biogenesis of c-type cytochromes. Transiently binds heme delivered by CcmC and transfers the heme to apo-cytochromes in a process facilitated by CcmF and CcmH. The chain is Cytochrome c-type biogenesis protein CcmE from Tatumella citrea (Pantoea citrea).